The following is an 810-amino-acid chain: Interleukin-4 receptor subunit alpha (810 aa).

The N-terminal stretch at 1-25 (MGRLCTKFLTSVGCLILLLVTGSGS) is a signal peptide. Residues 26-233 (IKVLGEPTCF…NHFQLPLIQR (208 aa)) are Extracellular-facing. A disulfide bridge connects residues Cys-34 and Cys-44. Asn-72 carries an N-linked (GlcNAc...) asparagine glycan. Cys-75 and Cys-87 are disulfide-bonded. Residues 126–224 (APDNLTLHTN…EWSPSITWYN (99 aa)) enclose the Fibronectin type-III domain. Asn-129, Asn-135, and Asn-163 each carry an N-linked (GlcNAc...) asparagine glycan. A Phosphoserine modification is found at Ser-165. Residues 213 to 217 (WSEWS) carry the WSXWS motif motif. A helical membrane pass occupies residues 234 to 257 (LPLGVTISCLCIPLFCLFCYFSIT). Topologically, residues 258–810 (KIKKIWWDQI…PVGALGIAVS (553 aa)) are cytoplasmic. A Box 1 motif motif is present at residues 263-271 (WWDQIPTPA). The required for IRS1 activation and IL4-induced cell growth stretch occupies residues 441–557 (GSGQASVSWA…ESWEQILHMS (117 aa)). Positions 460–482 (ATCQVTEQPSHPGPLSGSPAQSA) are disordered. Tyr-500 carries the post-translational modification Phosphotyrosine. The disordered stretch occupies residues 510–546 (APNPGELAPEQQQADHLEEEEPPSPADPHSSGPPMQP). Residues 557–653 (SVLQHGAAAG…SSVPLFTFGL (97 aa)) are required for IL4-induced gene expression. Phosphotyrosine is present on residues Tyr-575, Tyr-603, and Tyr-631. Residues 586 to 672 (AAQDPGVPGV…NSDPPKSPPE (87 aa)) form a disordered region. A compositionally biased stretch (low complexity) spans 635 to 647 (QNPVPNQSPSSVP). Residues 707–712 (IVYSSL) carry the ITIM motif motif. The segment at 766–810 (PPEANLMSAPKTPSNLSGEGKGPGHSPVPSQTTEVPVGALGIAVS) is disordered.

It belongs to the type I cytokine receptor family. Type 4 subfamily. The functional IL4 receptor is formed by initial binding of IL4 to IL4R. Subsequent recruitment to the complex of the common gamma chain, in immune cells, creates a type I receptor and, in non-immune cells, of IL13RA1 forms a type II receptor. IL4R can also interact with the IL13/IL13RA1 complex to form a similar type II receptor. Interacts with the SH2-containing phosphatases, PTPN6/SHIP1, PTPN11/SHIP2 and INPP5D/SHIP. Interacts with JAK3. Interacts with PIK3C3. Interacts with JAK1 through a Box 1-containing region; inhibited by SOCS5. Interacts with SOCS5; inhibits IL4 signaling. Interacts with CLM1. Interacts with IL13RA2. In terms of processing, on IL4 binding, phosphorylated on C-terminal tyrosine residues. Soluble IL4R can also be produced by proteolytic cleavage at the cell surface (shedding). In terms of tissue distribution, expressed in both Th1 and Th2 cells.

It is found in the cell membrane. The protein resides in the secreted. Receptor for both interleukin 4 and interleukin 13. Couples to the JAK1/2/3-STAT6 pathway. The IL4 response is involved in promoting Th2 differentiation. The IL4/IL13 responses are involved in regulating IgE production and, chemokine and mucus production at sites of allergic inflammation. In certain cell types, can signal through activation of insulin receptor substrates, IRS1/IRS2. This Mus musculus (Mouse) protein is Interleukin-4 receptor subunit alpha (Il4r).